The primary structure comprises 136 residues: Small ribosomal subunit protein uS9 (136 aa).

The protein belongs to the universal ribosomal protein uS9 family.

This is Small ribosomal subunit protein uS9 from Borreliella burgdorferi (strain ZS7) (Borrelia burgdorferi).